An 80-amino-acid polypeptide reads, in one-letter code: Raniseptin-2 (80 aa).

A signal peptide spans 1-22; sequence MAFLKKSLFLVLFLGIVSLSIC. The propeptide occupies 23–49; that stretch reads EEEKRVGEEEEKQEEENEELSEEELRE. The tract at residues 27–46 is disordered; it reads RVGEEEEKQEEENEELSEEE. Residues 30–44 show a composition bias toward acidic residues; sequence EEEEKQEEENEELSE.

This sequence belongs to the frog skin active peptide (FSAP) family. Dermaseptin subfamily. Expressed by the skin glands.

It is found in the secreted. In terms of biological role, has antibacterial activity. The sequence is that of Raniseptin-2 from Boana raniceps (Chaco tree frog).